The following is a 107-amino-acid chain: uncharacterized protein (107 aa).

A helical transmembrane segment spans residues valine 13–valine 33.

The protein resides in the membrane. This is an uncharacterized protein from Saccharomyces cerevisiae (strain ATCC 204508 / S288c) (Baker's yeast).